The primary structure comprises 838 residues: Ras-interacting protein RIP3 (838 aa).

3 disordered regions span residues 66–97, 157–290, and 305–336; these read VSTS…QQQA, KPTT…TSPK, and NSKT…QQQA. Low complexity-rich tracts occupy residues 67-97, 157-241, and 248-284; these read STSN…QQQA, KPTT…QQKP, and PQNI…QQQQ. The span at 310-321 shows a compositional bias: basic and acidic residues; the sequence is QKSDKTSEKENK. The CRIM domain maps to 441–515; that stretch reads QLKVRVIEKA…KDEVLVLCPN (75 aa). Disordered regions lie at residues 522–581 and 594–646; these read KSSS…QQTQ and QQQQ…GPDA. 3 stretches are compositionally biased toward low complexity: residues 537–556, 563–581, and 594–620; these read NNNN…SNNN, QPQQ…QQTQ, and QQQQ…QPDQ. A compositionally biased stretch (gly residues) spans 621 to 631; sequence VGGGGGGGGGN. One can recognise an RBD domain in the interval 648–717; it reads LVVKITLPDS…GGADLILVSR (70 aa).

The protein belongs to the SIN1 family. Interacts with activated RasG. Part of a complex, TORC2, consisting of tor, lst8, piaA and ripA. Additional proteins, such as 14-3-3 and heat-shock proteins, may also belong to the TORC2 complex.

Functionally, component of a Ras-regulated pathway involved in integrating chemotaxis and signal relay pathways that are essential for aggregation. In Dictyostelium discoideum (Social amoeba), this protein is Ras-interacting protein RIP3 (ripA).